We begin with the raw amino-acid sequence, 140 residues long: Relaxin-3 (140 aa).

The signal sequence occupies residues 1 to 26 (MAKRPLLLLLLAVWVLAGELWLRTEA). Disulfide bonds link C36–C127, C48–C140, and C126–C131. Positions 56–116 (SDMLAHEALG…RTPGALRGSR (61 aa)) are cleaved as a propeptide — connecting peptide.

It belongs to the insulin family. In terms of assembly, heterodimer of a B chain and an A chain linked by two disulfide bonds.

It is found in the secreted. Functionally, may play a role in neuropeptide signaling processes. Ligand for LGR7, RXFP3 and RXFP4. This Sus scrofa (Pig) protein is Relaxin-3 (RLN3).